The sequence spans 135 residues: Transcriptional activator protein (135 aa).

Positions 17–32 (KIQHHIAKKRQVRRRR) match the Nuclear localization signal motif. A zinc finger spans residues 37–54 (CGCSYYIHLDCINHGFTH). The tract at residues 120-135 (HLDDLTVSDWSFFKSL) is transactivation.

This sequence belongs to the geminiviridae transcriptional activator protein family. As to quaternary structure, monomer. Homodimer. Homooligomer. Self-interaction correlates with nuclear localization and efficient activation of transcription. Monomers suppress local silencing by interacting with and inactivating host adenosine kinase 2 (ADK2) in the cytoplasm. Interacts with and inhibits host SNF1 kinase. Binds to ssDNA. May interact with host RPS27A. Post-translationally, phosphorylated.

The protein resides in the host nucleus. It is found in the host cytoplasm. Functionally, multifunctional protein that modulates host antiviral defenses and promotes host attractiveness to insect vectors. Acts as a suppressor of RNA-mediated gene silencing, also known as post-transcriptional gene silencing (PTGS), a mechanism of plant viral defense that limits the accumulation of viral RNAs. TrAP suppresses the host RNA silencing by inhibiting adenosine kinase 2 (ADK2), a kinase involved in a general methylation pathway. Also suppresses the host basal defense by interacting with and inhibiting SNF1 kinase, a key regulator of cell metabolism implicated in innate antiviral defense. In terms of biological role, inhibits signal transduction by the phytohormone jasmonate, making the infected plant more attractive to aphids, which are the second host to play a role as a dissemination vector. Acts by binding to ubiquitin precursor RPS27A, thereby preventing ubiquitin degradation of JAZ. The protein is Transcriptional activator protein of Tomato yellow leaf curl Sardinia virus (isolate Spain-1) (TYLCSV).